We begin with the raw amino-acid sequence, 551 residues long: Methyl-accepting chemotaxis protein I (551 aa).

At 1-6 (MLKRIK) the chain is on the cytoplasmic side. A helical membrane pass occupies residues 7 to 30 (IVTSLLLVLAVFGLLQLTSGGLFF). The Periplasmic portion of the chain corresponds to 31-190 (NALKNDKENF…AVSDNNASYS (160 aa)). The the 3 Arg may form a positively charged pocket, which binds the alpha-carboxyl group of the attractant AA stretch occupies residues 64–73 (RNTLNRAGIR). Residues 191–210 (QAMWILVGVMIVVLAVIFAV) form a helical membrane-spanning segment. At 211 to 551 (WFGIKASLVA…ADSEENWETF (341 aa)) the chain is on the cytoplasmic side. Positions 216 to 268 (ASLVAPMNRLIDSIRHIAGGDLVKPIEVDGSNEMGQLAESLRHMQGELMRTVG) constitute an HAMP domain. Residues 273–502 (GANAIYSGAS…ESAAAAAALE (230 aa)) form the Methyl-accepting transducer domain. Gln-297 carries the post-translational modification Glutamate methyl ester (Gln). Residue Glu-304 is modified to Glutamate methyl ester (Glu). Gln-311 carries the glutamate methyl ester (Gln) modification. Glutamate methyl ester (Glu) occurs at positions 493 and 502.

The protein belongs to the methyl-accepting chemotaxis (MCP) protein family.

It localises to the cell inner membrane. In terms of biological role, receptor for the attractant L-serine and related amino acids. Is also responsible for chemotaxis away from a wide range of repellents, including leucine, indole, and weak acids. Chemotactic-signal transducers respond to changes in the concentration of attractants and repellents in the environment, transduce a signal from the outside to the inside of the cell, and facilitate sensory adaptation through the variation of the level of methylation. Attractants increase the level of methylation while repellents decrease the level of methylation, the methyl groups are added by the methyltransferase CheR and removed by the methylesterase CheB. The protein is Methyl-accepting chemotaxis protein I (tsr) of Escherichia coli (strain K12).